The chain runs to 308 residues: Acetaldehyde dehydrogenase (308 aa).

25-28 (TGAI) is a binding site for NAD(+). Cysteine 139 acts as the Acyl-thioester intermediate in catalysis. Residue asparagine 279 participates in NAD(+) binding.

This sequence belongs to the acetaldehyde dehydrogenase family.

It carries out the reaction acetaldehyde + NAD(+) + CoA = acetyl-CoA + NADH + H(+). The sequence is that of Acetaldehyde dehydrogenase from Streptomyces griseus subsp. griseus (strain JCM 4626 / CBS 651.72 / NBRC 13350 / KCC S-0626 / ISP 5235).